Consider the following 459-residue polypeptide: mRNA-capping enzyme subunit alpha (459 aa).

The active-site N6-GMP-lysine intermediate is K70. A disordered region spans residues 415 to 459; the sequence is MAGGSGRPLPSQSQNATLSTSKPVHSQPPSNDKEPKYVDEDDWSD. The span at 424–444 shows a compositional bias: polar residues; it reads PSQSQNATLSTSKPVHSQPPS.

It belongs to the eukaryotic GTase family. In terms of assembly, heterodimer. The mRNA-capping enzyme is composed of two separate chains alpha and beta, respectively a mRNA guanylyltransferase and an mRNA 5'-triphosphate monophosphatase.

The protein resides in the nucleus. The enzyme catalyses a 5'-end diphospho-ribonucleoside in mRNA + GTP + H(+) = a 5'-end (5'-triphosphoguanosine)-ribonucleoside in mRNA + diphosphate. Second step of mRNA capping. Transfer of the GMP moiety of GTP to the 5'-diphosphate terminus of RNA via a covalent enzyme-GMP reaction intermediate. This chain is mRNA-capping enzyme subunit alpha (CEG1), found in Saccharomyces cerevisiae (strain ATCC 204508 / S288c) (Baker's yeast).